Consider the following 387-residue polypeptide: Acetylajmalan esterase (387 aa).

Residues 1-22 (MGFARLLHLVFSLLVFAGITNG) form the signal peptide. Ser36 serves as the catalytic Nucleophile. N-linked (GlcNAc...) asparagine glycans are attached at residues Asn98, Asn180, Asn199, Asn249, and Asn296. Catalysis depends on residues Asp337 and His340.

The protein belongs to the 'GDSL' lipolytic enzyme family.

It carries out the reaction 17-O-acetylajmaline + H2O = ajmaline + acetate + H(+). The enzyme catalyses 17-O-acetylnorajmaline + H2O = norajmaline + acetate + H(+). It functions in the pathway alkaloid biosynthesis; ajmaline biosynthesis. Functionally, acetylesterase involved in the biosynthesis of ajmaline-type monoterpenoid indole alkaloids (MIAs) natural products, important plant-derived pharmaceuticals used in the therapy of heart disorders. Deacetylates 17-O-acetylajmaline and 17-O-acetylnorajmaline to produce ajmaline and norajmaline, but is inactive toward other acetylated alkaloids. The protein is Acetylajmalan esterase of Rauvolfia serpentina (Serpentine wood).